We begin with the raw amino-acid sequence, 197 residues long: Nucleoside triphosphate pyrophosphatase (197 aa).

Asp-72 serves as the catalytic Proton acceptor.

The protein belongs to the Maf family. It depends on a divalent metal cation as a cofactor.

The protein localises to the cytoplasm. The catalysed reaction is a ribonucleoside 5'-triphosphate + H2O = a ribonucleoside 5'-phosphate + diphosphate + H(+). It carries out the reaction a 2'-deoxyribonucleoside 5'-triphosphate + H2O = a 2'-deoxyribonucleoside 5'-phosphate + diphosphate + H(+). In terms of biological role, nucleoside triphosphate pyrophosphatase. May have a dual role in cell division arrest and in preventing the incorporation of modified nucleotides into cellular nucleic acids. The sequence is that of Nucleoside triphosphate pyrophosphatase from Corynebacterium efficiens (strain DSM 44549 / YS-314 / AJ 12310 / JCM 11189 / NBRC 100395).